A 264-amino-acid polypeptide reads, in one-letter code: Hydroxyethylthiazole kinase (264 aa).

Met-52 contributes to the substrate binding site. Arg-127 and Thr-173 together coordinate ATP. Gly-200 provides a ligand contact to substrate.

This sequence belongs to the Thz kinase family. It depends on Mg(2+) as a cofactor.

It catalyses the reaction 5-(2-hydroxyethyl)-4-methylthiazole + ATP = 4-methyl-5-(2-phosphooxyethyl)-thiazole + ADP + H(+). It functions in the pathway cofactor biosynthesis; thiamine diphosphate biosynthesis; 4-methyl-5-(2-phosphoethyl)-thiazole from 5-(2-hydroxyethyl)-4-methylthiazole: step 1/1. In terms of biological role, catalyzes the phosphorylation of the hydroxyl group of 4-methyl-5-beta-hydroxyethylthiazole (THZ). The sequence is that of Hydroxyethylthiazole kinase from Serratia proteamaculans (strain 568).